A 273-amino-acid polypeptide reads, in one-letter code: F-actin-capping protein subunit alpha (273 aa).

Belongs to the F-actin-capping protein alpha subunit family. Component of the F-actin capping complex, composed of a heterodimer of an alpha and a beta subunit.

Its subcellular location is the cytoplasm. It is found in the cytoskeleton. It localises to the actin patch. Its function is as follows. F-actin-capping proteins bind in a Ca(2+)-independent manner to the fast growing ends of actin filaments (barbed end) thereby blocking the exchange of subunits at these ends. Unlike other capping proteins (such as gelsolin and severin), these proteins do not sever actin filaments. The protein is F-actin-capping protein subunit alpha (fac-1) of Neurospora crassa (strain ATCC 24698 / 74-OR23-1A / CBS 708.71 / DSM 1257 / FGSC 987).